We begin with the raw amino-acid sequence, 257 residues long: Acetylglutamate kinase (257 aa).

Substrate contacts are provided by residues 43 to 44 (GG), Arg65, and Asn157. ATP is bound by residues 180–185 (DVSGIL) and 208–210 (IIT).

Belongs to the acetylglutamate kinase family. ArgB subfamily. As to quaternary structure, homodimer.

It localises to the cytoplasm. The catalysed reaction is N-acetyl-L-glutamate + ATP = N-acetyl-L-glutamyl 5-phosphate + ADP. Its pathway is amino-acid biosynthesis; L-arginine biosynthesis; N(2)-acetyl-L-ornithine from L-glutamate: step 2/4. Its function is as follows. Catalyzes the ATP-dependent phosphorylation of N-acetyl-L-glutamate. This chain is Acetylglutamate kinase, found in Pectobacterium atrosepticum (strain SCRI 1043 / ATCC BAA-672) (Erwinia carotovora subsp. atroseptica).